Reading from the N-terminus, the 358-residue chain is Gap junction alpha-5 protein (358 aa).

The Cytoplasmic portion of the chain corresponds to 1–19 (MGDWSFLGEFLEEVHKHST). A helical membrane pass occupies residues 20–40 (VIGKVWLTVLFIFRMLVLGTA). Residues 41 to 76 (AESSWGDEQADFRCDTIQPGCQNVCYDQAFPISHIR) are Extracellular-facing. The helical transmembrane segment at 77–97 (YWVLQIIFVSTPSLVYMGHAM) threads the bilayer. Residues 98–164 (HTVRMQEKQK…CTILIRTTME (67 aa)) lie on the Cytoplasmic side of the membrane. The helical transmembrane segment at 165-185 (VAFIVGQYLLYGIFLDTLHVC) threads the bilayer. Residues 186–205 (RRSPCPHPVNCYVSRPTEKN) lie on the Extracellular side of the membrane. The helical transmembrane segment at 206–226 (VFIVFMMAVAGLSLFLSLAEL) threads the bilayer. The Cytoplasmic portion of the chain corresponds to 227-358 (YHLGWKKIRQ…SKARSDDLSV (132 aa)). 2 disordered regions span residues 242–262 (RQGV…QSLT) and 318–358 (SQKP…DLSV). Residues Ser353 and Ser357 each carry the phosphoserine modification.

The protein belongs to the connexin family. Alpha-type (group II) subfamily. A connexon is composed of a hexamer of connexins. As to expression, abundantly expressed in the lung, also expressed in the kidney and heart.

It is found in the cell membrane. The protein resides in the cell junction. It localises to the gap junction. In terms of biological role, one gap junction consists of a cluster of closely packed pairs of transmembrane channels, the connexons, through which materials of low MW diffuse from one cell to a neighboring cell. This is Gap junction alpha-5 protein (Gja5) from Mus musculus (Mouse).